The sequence spans 391 residues: Formate-dependent phosphoribosylglycinamide formyltransferase (391 aa).

N(1)-(5-phospho-beta-D-ribosyl)glycinamide-binding positions include 20–21 and glutamate 80; that span reads EL. Residues arginine 112, lysine 153, 158 to 163, 193 to 196, and glutamate 201 contribute to the ATP site; these read SSGKGQ and EGFI. In terms of domain architecture, ATP-grasp spans 117 to 306; the sequence is RLAAETLGLP…EFALHVRAIL (190 aa). Positions 265 and 277 each coordinate Mg(2+). Residues aspartate 284, lysine 354, and 361-362 contribute to the N(1)-(5-phospho-beta-D-ribosyl)glycinamide site; that span reads RR.

It belongs to the PurK/PurT family. In terms of assembly, homodimer.

The catalysed reaction is N(1)-(5-phospho-beta-D-ribosyl)glycinamide + formate + ATP = N(2)-formyl-N(1)-(5-phospho-beta-D-ribosyl)glycinamide + ADP + phosphate + H(+). Its pathway is purine metabolism; IMP biosynthesis via de novo pathway; N(2)-formyl-N(1)-(5-phospho-D-ribosyl)glycinamide from N(1)-(5-phospho-D-ribosyl)glycinamide (formate route): step 1/1. Its function is as follows. Involved in the de novo purine biosynthesis. Catalyzes the transfer of formate to 5-phospho-ribosyl-glycinamide (GAR), producing 5-phospho-ribosyl-N-formylglycinamide (FGAR). Formate is provided by PurU via hydrolysis of 10-formyl-tetrahydrofolate. This chain is Formate-dependent phosphoribosylglycinamide formyltransferase, found in Shewanella oneidensis (strain ATCC 700550 / JCM 31522 / CIP 106686 / LMG 19005 / NCIMB 14063 / MR-1).